The chain runs to 239 residues: tRNA (guanine-N(1)-)-methyltransferase (239 aa).

S-adenosyl-L-methionine-binding positions include Gly108 and 127–132 (LGDFVL).

Belongs to the RNA methyltransferase TrmD family. Homodimer.

The protein resides in the cytoplasm. It carries out the reaction guanosine(37) in tRNA + S-adenosyl-L-methionine = N(1)-methylguanosine(37) in tRNA + S-adenosyl-L-homocysteine + H(+). Its function is as follows. Specifically methylates guanosine-37 in various tRNAs. This Streptococcus thermophilus (strain ATCC BAA-250 / LMG 18311) protein is tRNA (guanine-N(1)-)-methyltransferase.